Consider the following 601-residue polypeptide: MSDNRSHIEEKYQWDLTTVFATDELWETEVVELTQAIDNAKGFSGHLLDSSQSLLEITEVELDLSRRLEKVYVYASMKNDQDTTVAKYQEFQAKATALYAKFSETFSFYEPELLQLSESDYQSFLLEMPDLQKYDHFFEKIFANKPHVLSQNEEELLAGASEIFGAAGETFEILDNADMVFPVVKNAKGEEVELTHGNFISLMESSDRTVRKEAYQAMYSTYEQFQHTYAKTLQTNVKSQNFKARVHHYQSARQSALSANFIPEEVYETLIKTVNHHLPLLHRYMKLRQKVLGLDDLKMYDVYTPLSQMDMSFTYDEALKKSEEVLAIFGEVYSERVHRAFTERWIDVHVNKGKRSGAYSGGSYDTNAFMLLNWQDTLDNLYTLVHETGHSLHSTFTRENQPYVYGDYSIFLAEIASTTNENILTETLLKEVKDDKNRFAILNHYLDGFKGTIFRQTQFAEFEHAIHVADQEGQVLTSEYLNNLYAELNEKYYGLTKEDNHFIQYEWARIPHFYYNYYVFQYATGFAAANYLAERIVNGNPEDKEAYLNYLKAGNSDYPLNVIAKAGVDMTSADYLDAAFRVFEERLVELENLVAKGVHND.

Zn(2+) is bound at residue H386. The active site involves E387. Zn(2+) contacts are provided by H390 and H393.

The protein belongs to the peptidase M3B family. Zn(2+) serves as cofactor.

The protein localises to the cytoplasm. Functionally, has oligopeptidase activity and degrades a variety of small bioactive peptides, including bradykinin, neurotensin, and peptide fragments of substance P and adrenocorticotropin. Also hydrolyzes the synthetic collagen-like substrate N-(3-[2-furyl]acryloyl)-Leu-Gly-Pro-Ala (FALGPA). The polypeptide is Group B oligopeptidase PepB (pepB) (Streptococcus agalactiae serotype III (strain NEM316)).